The primary structure comprises 196 residues: MMWEQFKKEKLRGYLEAKNQRKVDFDIVELLDLINSFDDFVTLSSCSGRIAVVDLEKPGDKASSLFLGKWHEGVEVSEVAEAALRSRKVAWLIQYPPIIHVACRNIGAAKLLMNAANTAGFRRSGVISLSNYVVEIASLERIELPVAEKGLMLVDDAYLSYVVRWANEKLLKGKEKLGRLQEALESLQRENAYCSD.

Belongs to the TYW3 family.

It carries out the reaction 4-demethyl-7-[(3S)-3-amino-3-carboxypropyl]wyosine(37) in tRNA(Phe) + S-adenosyl-L-methionine = 7-[(3S)-3-amino-3-carboxypropyl]wyosine(37) in tRNA(Phe) + S-adenosyl-L-homocysteine + H(+). In terms of biological role, S-adenosyl-L-methionine-dependent methyltransferase that acts as a component of the wyosine derivatives biosynthesis pathway. Probably methylates N-4 position of wybutosine-86 to produce wybutosine-72. The polypeptide is tRNA(Phe) 7-((3-amino-3-carboxypropyl)-4-demethylwyosine(37)-N(4))-methyltransferase (Archaeoglobus fulgidus (strain ATCC 49558 / DSM 4304 / JCM 9628 / NBRC 100126 / VC-16)).